The chain runs to 222 residues: Sugar fermentation stimulation protein homolog (222 aa).

It belongs to the SfsA family.

The polypeptide is Sugar fermentation stimulation protein homolog (Thermoplasma acidophilum (strain ATCC 25905 / DSM 1728 / JCM 9062 / NBRC 15155 / AMRC-C165)).